The following is a 145-amino-acid chain: Histone H3-like centromeric protein A (145 aa).

The segment covering 1 to 19 has biased composition (basic residues); the sequence is MPRHTSAHKRKPSTPRRRS. Positions 1–54 are disordered; sequence MPRHTSAHKRKPSTPRRRSPPASLPPPAGSRTRRHSGPSGSSPRKKHKFRPGTR. S19 carries the post-translational modification Phosphoserine. The H3-like stretch occupies residues 51-145; sequence PGTRALMEIR…ARRIRGVEHM (95 aa).

The protein belongs to the histone H3 family. Component of centromeric nucleosomes, where DNA is wrapped around a histone octamer core. The octamer contains two molecules each of H2A, H2B, CENPA and H4 assembled in one CENPA-H4 heterotetramer and two H2A-H2B heterodimers. CENPA modulates the DNA-binding characteristics of nucleosomes so that protruding DNA ends have higher flexibility than in nucleosomes containing conventional histone H3.

It localises to the nucleus. The protein resides in the chromosome. The protein localises to the centromere. Its function is as follows. Histone H3-like nucleosomal protein that is specifically found in centromeric nucleosomes. Replaces conventional H3 in the nucleosome core of centromeric chromatin that serves as an assembly site for the inner kinetochore. The presence of CENPA subtly modifies the nucleosome structure and the way DNA is wrapped around the nucleosome and gives rise to protruding DNA ends that are less well-ordered and rigid compared to nucleosomes containing histone H3. May serve as an epigenetic mark that propagates centromere identity through replication and cell division. Required for recruitment and assembly of kinetochore proteins, and as a consequence required for progress through mitosis, chromosome segregation and cytokinesis. In Danio rerio (Zebrafish), this protein is Histone H3-like centromeric protein A (cenpa).